Reading from the N-terminus, the 299-residue chain is tRNA dimethylallyltransferase (299 aa).

13–20 (GATASGKT) serves as a coordination point for ATP. 15-20 (TASGKT) is a binding site for substrate. Residues 38–41 (DSRQ) form an interaction with substrate tRNA region.

It belongs to the IPP transferase family. Monomer. It depends on Mg(2+) as a cofactor.

The catalysed reaction is adenosine(37) in tRNA + dimethylallyl diphosphate = N(6)-dimethylallyladenosine(37) in tRNA + diphosphate. Catalyzes the transfer of a dimethylallyl group onto the adenine at position 37 in tRNAs that read codons beginning with uridine, leading to the formation of N6-(dimethylallyl)adenosine (i(6)A). The protein is tRNA dimethylallyltransferase of Prochlorococcus marinus (strain MIT 9312).